The chain runs to 705 residues: Probable glutamate carboxypeptidase AMP1 (705 aa).

The Cytoplasmic portion of the chain corresponds to 1-24; it reads MSQPLTTRPTVTGISIIPFRQPPP. The helical; Signal-anchor for type II membrane protein transmembrane segment at 25-42 threads the bilayer; sequence LCSFLFVIVLFVATFYTL. The Extracellular portion of the chain corresponds to 43-705; sequence HHPDAVTPPL…ASKALKGGFT (663 aa). N-linked (GlcNAc...) asparagine glycosylation is found at Asn-74, Asn-137, and Asn-322. Positions 255-548 are catalytic; the sequence is GVVGGEKLSL…GIWGLLGILL (294 aa). Zn(2+)-binding residues include His-356 and Asp-366. Catalysis depends on Glu-403, which acts as the Nucleophile. Glu-404, Asp-432, and His-514 together coordinate Zn(2+). N-linked (GlcNAc...) asparagine glycosylation is present at Asn-676.

It belongs to the peptidase M28 family. M28B subfamily. The cofactor is Zn(2+). In terms of tissue distribution, expressed in all plant parts. Highest levels in the bolt stem, inflorescence, root and silique. Low level in leaves.

Its subcellular location is the endoplasmic reticulum membrane. The enzyme catalyses Release of an unsubstituted, C-terminal glutamyl residue, typically from Ac-Asp-Glu or folylpoly-gamma-glutamates.. Its function is as follows. May modulate the level of one or more small signaling molecules that have a role in regulating meristem function. May play a role in balancing and restricting the meristem-promoting activity of auxin signaling. Involved in ethylene and giberellin (GA) signaling pathways or in a parallel pathway controlling cell and hypocotyl elongation and cellular organization. Involved in abscisic acid (ABA) signaling pathway. Plays a negative role in ABA-mediated seed germination and seedling development. Acts in association with LAMP1 to suppress ectopic stem cell niche formation in the shoot apical meristem (SAM) independently of cytokinin signaling pathway. Modulates responses to ABA, oxidative stress and abotic stress. Acts as a negative regulator of the ABA signaling pathway to modulate freezing and drought stress responses. Mediates carbon and amino acid metabolism. May be involved in the acquisition and/or maintenance of seed dormancy. Involved in the regulation of response to heat shock and plant defense. This is Probable glutamate carboxypeptidase AMP1 from Arabidopsis thaliana (Mouse-ear cress).